We begin with the raw amino-acid sequence, 201 residues long: Probable cytokinin riboside 5'-monophosphate phosphoribohydrolase LOG6 (201 aa).

Residues Glu-89, 107-108, 124-130, and Thr-136 each bind substrate; these read RK and GYGTLEE.

It belongs to the LOG family.

The enzyme catalyses N(6)-(dimethylallyl)adenosine 5'-phosphate + H2O = N(6)-dimethylallyladenine + D-ribose 5-phosphate. The catalysed reaction is 9-ribosyl-trans-zeatin 5'-phosphate + H2O = trans-zeatin + D-ribose 5-phosphate. Its function is as follows. Cytokinin-activating enzyme working in the direct activation pathway. Phosphoribohydrolase that converts inactive cytokinin nucleotides to the biologically active free-base forms. The polypeptide is Probable cytokinin riboside 5'-monophosphate phosphoribohydrolase LOG6 (LOG6) (Arabidopsis thaliana (Mouse-ear cress)).